The sequence spans 331 residues: MIPVIRSFLSLLLCVGLTFGLGGCVTTSLPMAAASPWNSQKLGIESNPLDVAFTNESHGFLVGSNRLVMETSDGGETWEEREIDLPADENFRLISIDFNGDEGWIAGQPGLLLHSDDAGQSWSRLLLDTKLPGDPYLITALGSKKAELATNVGAIYQSSDAGKSWQAEVVDAAGSVRDLRRGDDGRYVSVSSLGNFFSTWDPGQSNWQVHQRVSSQRLQSMGYQPDGQMWMVTRGAQLRFNPEGGDYEEWSKPVIPITNGYGYLDMAWDPQGNIWAGGGNGTLLVSSDGGKEWEKDPVGTATPSNFTRFVFLGGNKAFALGERGAILRWVG.

The signal sequence occupies residues 1-23 (MIPVIRSFLSLLLCVGLTFGLGG). Cys-24 carries N-palmitoyl cysteine lipidation. Cys-24 carries S-diacylglycerol cysteine lipidation.

This sequence belongs to the Ycf48 family. As to quaternary structure, part of early PSII assembly complexes which includes D1 (psbA) and PsbI; not found in mature PSII. Binds to the lumenal side of PSII complexes. Interacts with YidC.

Its subcellular location is the cellular thylakoid membrane. A factor required for optimal assembly of photosystem II (PSII), acting in the early stages of PSII assembly. Also plays a role in replacement of photodamaged D1 (psbA). Assists YidC in synthesis of chlorophyll-binding proteins. The sequence is that of Photosystem II assembly lipoprotein Ycf48 from Synechococcus sp. (strain RCC307).